Reading from the N-terminus, the 243-residue chain is HTH-type transcriptional regulator MlrA (243 aa).

Residues 3-72 enclose the HTH merR-type domain; the sequence is LYTIGEVALL…VSKVKVLLSS (70 aa). A DNA-binding region (H-T-H motif) is located at residues 6 to 25; the sequence is IGEVALLCDINPVTLRAWQR.

Functionally, transcriptional activator of csgD, which is required for production of the curli (AgF). This is HTH-type transcriptional regulator MlrA from Salmonella typhimurium (strain SL1344).